The chain runs to 279 residues: Cholesterol 25-hydroxylase-like protein 2 (279 aa).

Residues N6 and N13 are each glycosylated (N-linked (GlcNAc...) asparagine). 3 membrane-spanning segments follow: residues 36-56 (LFPV…YTVL), 86-106 (LALT…AQWL), and 120-140 (LTAF…QYYL). One can recognise a Fatty acid hydroxylase domain in the interval 128 to 262 (VGCTVVFDFQ…FAHWDWLGGT (135 aa)). The Histidine box-1 signature appears at 141–145 (WHLLH). A Histidine box-2 motif is present at residues 156 to 160 (HALHH). A run of 2 transmembrane segments spans residues 165 to 185 (TFSL…GFWT) and 189 to 209 (PLLL…NIWV). The short motif at 237-243 (RHDAHHQ) is the Histidine box-3 element.

Belongs to the sterol desaturase family. Fe cation serves as cofactor.

The protein localises to the endoplasmic reticulum membrane. May catalyze the formation of 25-hydroxycholesterol from cholesterol. In Danio rerio (Zebrafish), this protein is Cholesterol 25-hydroxylase-like protein 2.